The chain runs to 374 residues: Glutamate 5-kinase (374 aa).

Lysine 17 lines the ATP pocket. 3 residues coordinate substrate: serine 57, aspartate 144, and asparagine 156. Residues 176-177 (SD) and 218-224 (TGGMVTK) contribute to the ATP site. Positions 280–358 (QGALVLDDGA…RELARELGPA (79 aa)) constitute a PUA domain.

It belongs to the glutamate 5-kinase family.

Its subcellular location is the cytoplasm. The catalysed reaction is L-glutamate + ATP = L-glutamyl 5-phosphate + ADP. The protein operates within amino-acid biosynthesis; L-proline biosynthesis; L-glutamate 5-semialdehyde from L-glutamate: step 1/2. Functionally, catalyzes the transfer of a phosphate group to glutamate to form L-glutamate 5-phosphate. The chain is Glutamate 5-kinase from Streptomyces coelicolor (strain ATCC BAA-471 / A3(2) / M145).